We begin with the raw amino-acid sequence, 351 residues long: Signal recognition particle receptor FtsY (351 aa).

GTP is bound by residues G152–T159, D235–R239, and T299–D302.

The protein belongs to the GTP-binding SRP family. FtsY subfamily. Part of the signal recognition particle protein translocation system, which is composed of SRP and FtsY.

The protein resides in the cell membrane. It localises to the cytoplasm. It catalyses the reaction GTP + H2O = GDP + phosphate + H(+). Functionally, involved in targeting and insertion of nascent membrane proteins into the cytoplasmic membrane. Acts as a receptor for the complex formed by the signal recognition particle (SRP) and the ribosome-nascent chain (RNC). The protein is Signal recognition particle receptor FtsY of Metamycoplasma hominis (strain ATCC 23114 / DSM 25592 / NBRC 14850 / NCTC 10111 / PG21) (Mycoplasma hominis).